The primary structure comprises 346 residues: Methylthioribose-1-phosphate isomerase (346 aa).

Substrate-binding positions include 48-50 (RGA), R91, and Q196. The Proton donor role is filled by D237. 247–248 (NK) lines the substrate pocket.

It belongs to the eIF-2B alpha/beta/delta subunits family. MtnA subfamily.

It catalyses the reaction 5-(methylsulfanyl)-alpha-D-ribose 1-phosphate = 5-(methylsulfanyl)-D-ribulose 1-phosphate. Its pathway is amino-acid biosynthesis; L-methionine biosynthesis via salvage pathway; L-methionine from S-methyl-5-thio-alpha-D-ribose 1-phosphate: step 1/6. Functionally, catalyzes the interconversion of methylthioribose-1-phosphate (MTR-1-P) into methylthioribulose-1-phosphate (MTRu-1-P). The sequence is that of Methylthioribose-1-phosphate isomerase from Thermosipho africanus (strain TCF52B).